The following is a 628-amino-acid chain: uncharacterized protein (628 aa).

This sequence belongs to the ATP-dependent AMP-binding enzyme family.

This is an uncharacterized protein from Pseudomonas aeruginosa (strain ATCC 15692 / DSM 22644 / CIP 104116 / JCM 14847 / LMG 12228 / 1C / PRS 101 / PAO1).